The chain runs to 873 residues: Cyanophycin synthetase (873 aa).

The 257-residue stretch at 224–480 (KTILQDAGIP…VAAPVLDMLF (257 aa)) folds into the ATP-grasp domain. 495–501 (GTNGKTT) is a binding site for ATP.

In the C-terminal section; belongs to the MurCDEF family. As to quaternary structure, homodimer.

The enzyme catalyses [L-4-(L-arginin-2-N-yl)aspartate](n) + L-aspartate + ATP = [L-4-(L-arginin-2-N-yl)aspartate](n)-L-aspartate + ADP + phosphate + H(+). The catalysed reaction is [L-4-(L-arginin-2-N-yl)aspartate](n)-L-aspartate + L-arginine + ATP = [L-4-(L-arginin-2-N-yl)aspartate](n+1) + ADP + phosphate + H(+). Its function is as follows. Catalyzes the ATP-dependent polymerization of arginine and aspartate to multi-L-arginyl-poly-L-aspartic acid (cyanophycin; a water-insoluble reserve polymer). This Synechocystis sp. (strain ATCC 27184 / PCC 6803 / Kazusa) protein is Cyanophycin synthetase (cphA).